Reading from the N-terminus, the 143-residue chain is Crossover junction endodeoxyribonuclease Hjc (143 aa).

Mg(2+) is bound at residue Glu-11. Ser-31 is a catalytic residue. The Mg(2+) site is built by Asp-41 and Glu-54.

It belongs to the Holliday junction resolvase Hjc family. In terms of assembly, homodimer. Mg(2+) is required as a cofactor.

It carries out the reaction Endonucleolytic cleavage at a junction such as a reciprocal single-stranded crossover between two homologous DNA duplexes (Holliday junction).. Its function is as follows. A structure-specific endonuclease that resolves Holliday junction (HJ) intermediates during genetic recombination. Cleaves 4-way DNA junctions introducing paired nicks in opposing strands, leaving a 5'-terminal phosphate and a 3'-terminal hydroxyl group that are ligated to produce recombinant products. In terms of biological role, redundant function with Holliday junction resolvase Hje. The chain is Crossover junction endodeoxyribonuclease Hjc from Sulfolobus acidocaldarius (strain ATCC 33909 / DSM 639 / JCM 8929 / NBRC 15157 / NCIMB 11770).